The sequence spans 427 residues: Zinc finger protein 2 (427 aa).

The 72-residue stretch at 14–85 folds into the KRAB domain; that stretch reads VTFEDVAVTF…GFHGSEEKTW (72 aa). A disordered region spans residues 111-142; that stretch reads HRKQSSLCPKREIQTLTGGPEPEKESPKARTC. C2H2-type zinc fingers lie at residues 169–191, 197–219, 225–247, 253–275, 281–303, 309–331, 337–359, and 365–387; these read QECSECGKTFFDHSSLIRHQRTH, YDCPECGKAFSHRSSLSRHLMFH, YECDACGKAFFDRSSLTVHQRIH, FKCNDCGKAFFDRSSLTRHQRIH, YECQQCGKAFSQKSILTRHLLTH, YECRDCGKAFYGVTSLNRHQKVH, YQCSECGKAFFDRSSLTQHQKIH, and YECGECGKAFSQRCRLTRHQRVH. A C2H2-type 9; degenerate zinc finger spans residues 393 to 415; the sequence is FECSVCGKEFSSKSSIIQHQRRY.

It belongs to the krueppel C2H2-type zinc-finger protein family.

It localises to the nucleus. In terms of biological role, may be involved in transcriptional regulation. The polypeptide is Zinc finger protein 2 (Mus musculus (Mouse)).